We begin with the raw amino-acid sequence, 190 residues long: MAGSRLETVGSIFSRTRDLVRAGVLKEKPLWFDVYDAFPPLREPVFQRPRVRYGKAKAPIQDIWYHEDRIRAKFYSVYGSGQRAFDLFNPNFKSTCQRFVEKYTELQKLGETDEEKLFVETGKALLAEGVILRRVGEARTQHGGSHVSRKSEHLSVRPQTALEENETQKEVPQDQHLEAPADQSKGLLPP.

Ala-2 carries the post-translational modification N-acetylalanine. Lys-102 bears the N6-acetyllysine mark. Residues 139–190 (RTQHGGSHVSRKSEHLSVRPQTALEENETQKEVPQDQHLEAPADQSKGLLPP) are disordered. The span at 166–179 (ETQKEVPQDQHLEA) shows a compositional bias: basic and acidic residues.

The protein belongs to the mitochondrion-specific ribosomal protein mS23 family. Component of the mitochondrial small ribosomal subunit (mt-SSU). Mature mammalian 55S mitochondrial ribosomes consist of a small (28S) and a large (39S) subunit. The 28S small subunit contains a 12S ribosomal RNA (12S mt-rRNA) and 30 different proteins. The 39S large subunit contains a 16S rRNA (16S mt-rRNA), a copy of mitochondrial valine transfer RNA (mt-tRNA(Val)), which plays an integral structural role, and 52 different proteins.

Its subcellular location is the mitochondrion. The protein is Small ribosomal subunit protein mS23 (MRPS23) of Homo sapiens (Human).